The sequence spans 79 residues: MESIEQRVKKIVAEQLGVNEAEIKNESSFLDDLGADSLDMVELVMALEDEFETEIPDEEAEKITTVQQAVDYINSHGKQ.

In terms of domain architecture, Carrier spans 2-77 (ESIEQRVKKI…QAVDYINSHG (76 aa)). O-(pantetheine 4'-phosphoryl)serine is present on serine 37.

It belongs to the acyl carrier protein (ACP) family. Post-translationally, 4'-phosphopantetheine is transferred from CoA to a specific serine of apo-ACP by AcpS. This modification is essential for activity because fatty acids are bound in thioester linkage to the sulfhydryl of the prosthetic group.

Its subcellular location is the cytoplasm. Its pathway is lipid metabolism; fatty acid biosynthesis. Its function is as follows. Carrier of the growing fatty acid chain in fatty acid biosynthesis. The chain is Acyl carrier protein from Bordetella parapertussis (strain 12822 / ATCC BAA-587 / NCTC 13253).